Consider the following 190-residue polypeptide: Putative manganese efflux pump MntP (190 aa).

A run of 5 helical transmembrane segments spans residues 37–57, 64–84, 111–131, 135–155, and 164–184; these read LILA…GWGI, LSFI…GVGA, LILG…MAFV, IITL…VGAW, and FGGW…GNIL.

It belongs to the MntP (TC 9.B.29) family.

The protein localises to the cell membrane. Its function is as follows. Probably functions as a manganese efflux pump. The sequence is that of Putative manganese efflux pump MntP from Corynebacterium efficiens (strain DSM 44549 / YS-314 / AJ 12310 / JCM 11189 / NBRC 100395).